A 360-amino-acid polypeptide reads, in one-letter code: MTKKIIFTGGGTAGHVTLNLILIPKFIKDGWEVHYIGDDNGIEHQEIKKSGLDVAFHTIATGKLRRYFSWQNLLDIFKVGFGVMQSLFIIARLRPKALFSKGGFVSVPPVIAARLLGVPAFIHESDLSMGLANRIAYRFATTMYTTFEQEQTLVKLKHVGAVTKVTAPKSHSVASKQLAAVLEYFDPNLKTLLFIGGSAGARVFNRFITDHPELKEDFNIINISGDPSLNELSRHLYRVDYVTDLYQPLMEMADLVVTRGGSNTLFELLAMRKLQLIIPLGKEASRGDQLENAHYFTTRGYAEQLLEQELTLPHFQEKVREVFAKQSDYLSAMTSSSELQSPESFYQLLSADISSATKEN.

UDP-N-acetyl-alpha-D-glucosamine-binding positions include 12-14 (TAG), serine 198, and glutamine 289.

This sequence belongs to the glycosyltransferase 28 family. MurG subfamily.

It localises to the cell membrane. The catalysed reaction is Mur2Ac(oyl-L-Ala-gamma-D-Glu-L-Lys-D-Ala-D-Ala)-di-trans,octa-cis-undecaprenyl diphosphate + UDP-N-acetyl-alpha-D-glucosamine = beta-D-GlcNAc-(1-&gt;4)-Mur2Ac(oyl-L-Ala-gamma-D-Glu-L-Lys-D-Ala-D-Ala)-di-trans,octa-cis-undecaprenyl diphosphate + UDP + H(+). It functions in the pathway cell wall biogenesis; peptidoglycan biosynthesis. In terms of biological role, cell wall formation. Catalyzes the transfer of a GlcNAc subunit on undecaprenyl-pyrophosphoryl-MurNAc-pentapeptide (lipid intermediate I) to form undecaprenyl-pyrophosphoryl-MurNAc-(pentapeptide)GlcNAc (lipid intermediate II). The chain is UDP-N-acetylglucosamine--N-acetylmuramyl-(pentapeptide) pyrophosphoryl-undecaprenol N-acetylglucosamine transferase from Streptococcus equi subsp. zooepidemicus (strain H70).